A 372-amino-acid chain; its full sequence is Heterogeneous nuclear rnp K-like protein 2 (372 aa).

Residues 1–23 (MSDINDPNSISLPVGSSCTSRGA) are compositionally biased toward polar residues. Residues 1–49 (MSDINDPNSISLPVGSSCTSRGASTETFTTSRSTTLFSSQQESKDEGNV) form a disordered region. Residues 24–39 (STETFTTSRSTTLFSS) are compositionally biased toward low complexity. KH domains are found at residues 59–123 (TINH…LGQI), 167–232 (IGTS…LLQI), and 283–354 (EFKA…ESML).

It belongs to the HEK2 family. In terms of assembly, binds RNA.

The protein resides in the cytoplasm. It is found in the P-body. The protein localises to the nucleus. Its subcellular location is the chromosome. It localises to the telomere. Its function is as follows. RNA-binding protein involved in the correct localization of transcripts in the cell. RNA localization is a widespread mechanism for achieving localized protein synthesis. Involved in structural and functional organization of telomeric chromatin and regulates silencing at the HMR locus. This chain is Heterogeneous nuclear rnp K-like protein 2 (HEK2), found in Zygosaccharomyces rouxii (strain ATCC 2623 / CBS 732 / NBRC 1130 / NCYC 568 / NRRL Y-229).